The following is a 530-amino-acid chain: Autoinducer-2 kinase (530 aa).

This sequence belongs to the FGGY kinase family.

It is found in the cytoplasm. It catalyses the reaction (S)-4,5-dihydroxypentane-2,3-dione + ATP = (2S)-2-hydroxy-3,4-dioxopentyl phosphate + ADP + H(+). Functionally, catalyzes the phosphorylation of autoinducer-2 (AI-2) to phospho-AI-2, which subsequently inactivates the transcriptional regulator LsrR and leads to the transcription of the lsr operon. Phosphorylates the ring-open form of (S)-4,5-dihydroxypentane-2,3-dione (DPD), which is the precursor to all AI-2 signaling molecules, at the C5 position. This is Autoinducer-2 kinase from Salmonella paratyphi B (strain ATCC BAA-1250 / SPB7).